Reading from the N-terminus, the 331-residue chain is Smad-related protein daf-14 (331 aa).

The region spanning 134–331 (WCTIFYYELT…NERPEIGSRS (198 aa)) is the MH2 domain. The disordered stretch occupies residues 168–187 (ECRMSLTSQPSSRNSKSSQI). Positions 175–185 (SQPSSRNSKSS) are enriched in low complexity.

In terms of assembly, interacts with R-SMAD daf-8 and co-SMAD daf-3. Interacts with daf-3 in a daf-8 dependent manner.

Its function is as follows. Probably an atypical receptor-regulated SMAD (R-SMAD) that is an intracellular signal transducer and transcriptional modulator activated by TGF-beta-like daf-7 signaling. Plays a role in TGF-beta-like daf-7 signaling in regulating entry into a developmentally arrested larval state known as dauer, in response to harsh environmental conditions; partially redundant with R-SMAD daf-8. This is Smad-related protein daf-14 from Caenorhabditis elegans.